A 378-amino-acid polypeptide reads, in one-letter code: SWI/SNF-related matrix-associated actin-dependent regulator of chromatin subfamily B member 1 (378 aa).

The segment at 1 to 106 is DNA-binding; it reads MIMALSKTFG…DEKYKAVSIS (106 aa).

It belongs to the SNF5 family. As to quaternary structure, component of the multiprotein chromatin-remodeling complexes SWI/SNF. Component of neural progenitors-specific chromatin remodeling complex (npBAF complex) and the neuron-specific chromatin remodeling complex (nBAF complex). Component of the BAF (SWI/SNF) chromatin remodeling complex. Component of the SWI/SNF-B (PBAF) chromatin remodeling complex. Binds to double-stranded DNA.

The protein resides in the nucleus. In terms of biological role, involved in chromatin-remodeling. Core component of the BAF (SWI/SNF) complex. This ATP-dependent chromatin-remodeling complex plays important roles in cell proliferation and differentiation, in cellular antiviral activities and inhibition of tumor formation. Belongs to the neural progenitors-specific chromatin remodeling complex (npBAF complex) and the neuron-specific chromatin remodeling complex (nBAF complex) and may play a role in neural development. This is SWI/SNF-related matrix-associated actin-dependent regulator of chromatin subfamily B member 1 (smarcb1) from Xenopus laevis (African clawed frog).